We begin with the raw amino-acid sequence, 330 residues long: MKKSLYIISDGELKRKDNTLYFETSEERKYIPVENTREILIFGEVSMNKRLLEFLTESEIIIHFFNYYGYYIGSFYPREHLNSGYMILKQAEHYLDTGKRLNLAEKFVSGAIENIKKVLIYYHNRGKELSEIISKIQEIATNIPDCSTTDELMAIEGNIRDYYYQSFDIILDNEHFIFETRTKRPPKNRINALISFANSLVYTTCLSEIYQTHLDPRIGYLHATNFRRFTLNLDVAEIFKPIIADRAIFSIVNKRIVKPQHFEKKLDGIVLNDKGKQILLQEMDERLRSTIQHKKLGRHVSYRQLIRLELYKIQKHLMEEEEYKPFVTGW.

Glutamate 156, histidine 222, and glutamate 237 together coordinate Mn(2+).

It belongs to the CRISPR-associated endonuclease Cas1 family. Homodimer, forms a heterotetramer with a Cas2 homodimer. Mg(2+) is required as a cofactor. The cofactor is Mn(2+).

Functionally, CRISPR (clustered regularly interspaced short palindromic repeat), is an adaptive immune system that provides protection against mobile genetic elements (viruses, transposable elements and conjugative plasmids). CRISPR clusters contain spacers, sequences complementary to antecedent mobile elements, and target invading nucleic acids. CRISPR clusters are transcribed and processed into CRISPR RNA (crRNA). Acts as a dsDNA endonuclease. Involved in the integration of spacer DNA into the CRISPR cassette. The protein is CRISPR-associated endonuclease Cas1 2 of Thermodesulfovibrio yellowstonii (strain ATCC 51303 / DSM 11347 / YP87).